The following is a 336-amino-acid chain: N-acetylornithine carbamoyltransferase (336 aa).

Residues 49–52, Trp-77, and Arg-112 each bind carbamoyl phosphate; that span reads SMRT. Position 144 (Glu-144) interacts with N(2)-acetyl-L-ornithine. 148-151 provides a ligand contact to carbamoyl phosphate; it reads HPCQ. N(2)-acetyl-L-ornithine is bound by residues Lys-252 and Leu-295. Residue 294–295 coordinates carbamoyl phosphate; it reads CL. Lys-302 bears the N6-carboxylysine mark. Residue Arg-322 coordinates carbamoyl phosphate.

This sequence belongs to the aspartate/ornithine carbamoyltransferase superfamily. AOTCase family. Homotrimer.

The protein resides in the cytoplasm. The enzyme catalyses N(2)-acetyl-L-ornithine + carbamoyl phosphate = N(2)-acetyl-L-citrulline + phosphate + H(+). Its pathway is amino-acid biosynthesis; L-arginine biosynthesis. Its activity is regulated as follows. Carboxylation at Lys-302 increases the catalytic activity of the enzyme. Its function is as follows. Catalyzes the transfer of the carbamoyl group from carbamoyl phosphate to the delta-amino group of N(2)-acetyl-L-ornithine to produce N(2)-acetyl-L-citrulline. This is a step in an alternative arginine biosynthesis pathway. The enzyme has no activity with ornithine. This chain is N-acetylornithine carbamoyltransferase, found in Xylella fastidiosa (strain 9a5c).